The sequence spans 297 residues: DNA excision repair protein ERCC-1 (297 aa).

An N-acetylmethionine modification is found at Met-1. A disordered region spans residues 1-39 (MDPGKDKEGVPQPSGPPARKKFVIPLDEDEVPPGVAKPL). The Nuclear localization signal motif lies at 17–23 (PARKKFV). Glycyl lysine isopeptide (Lys-Gly) (interchain with G-Cter in SUMO2) cross-links involve residues Lys-21 and Lys-37. A DNA-binding region spans residues 134 to 156 (QSTCALFLSLRYHNLHPDYIHGR). A hhH2, dimerization with ERCC4/XPF region spans residues 220–297 (ADLLMEKLEQ…VLHEPFLKVP (78 aa)). Residue Lys-243 forms a Glycyl lysine isopeptide (Lys-Gly) (interchain with G-Cter in SUMO2) linkage.

Belongs to the ERCC1/RAD10/SWI10 family. As to quaternary structure, heterodimer composed of ERCC1 isoform 1 and ERCC4/XPF. Interacts with USP45. In terms of assembly, does not interact with ERCC4/XPF. Ubiquitinated with both 'Lys-48' and 'Lys-63' linkages. Deubiquitinated by USP45.

It localises to the nucleus. It is found in the cytoplasm. Functionally, non-catalytic component of a structure-specific DNA repair endonuclease responsible for the 5'-incision during DNA repair. Responsible, in conjunction with SLX4, for the first step in the repair of interstrand cross-links (ICL). Participates in the processing of anaphase bridge-generating DNA structures, which consist in incompletely processed DNA lesions arising during S or G2 phase, and can result in cytokinesis failure. Also required for homology-directed repair (HDR) of DNA double-strand breaks, in conjunction with SLX4. In terms of biological role, not functional in the nucleotide excision repair pathway. The protein is DNA excision repair protein ERCC-1 (ERCC1) of Homo sapiens (Human).